A 619-amino-acid polypeptide reads, in one-letter code: Sodium-coupled monocarboxylate transporter 2 (619 aa).

At Met-1–Trp-9 the chain is on the extracellular side. The helical transmembrane segment at Asp-10–Ile-30 threads the bilayer. Residues Lys-31–Gln-47 are Cytoplasmic-facing. A helical transmembrane segment spans residues Met-48–Leu-68. At Gly-69 to Ser-80 the chain is on the extracellular side. A helical transmembrane segment spans residues Phe-81–Pro-101. Topologically, residues Val-102–Thr-128 are cytoplasmic. A helical membrane pass occupies residues Ile-129–Ala-149. Residues Leu-150 to Asn-157 lie on the Extracellular side of the membrane. A helical transmembrane segment spans residues Leu-158 to Leu-178. At Lys-179–Ala-180 the chain is on the cytoplasmic side. The chain crosses the membrane as a helical span at residues Val-181 to Ile-201. Topologically, residues Gln-202 to Arg-235 are extracellular. Asn-219 carries N-linked (GlcNAc...) asparagine glycosylation. The chain crosses the membrane as a helical span at residues His-236 to Asn-256. Residues Gln-257 to Ala-275 lie on the Cytoplasmic side of the membrane. The chain crosses the membrane as a helical span at residues Leu-276–Ile-296. Over Met-297–Tyr-321 the chain is Extracellular. Residues Phe-322–Phe-342 form a helical membrane-spanning segment. Residues Ser-343–Cys-385 lie on the Cytoplasmic side of the membrane. A helical membrane pass occupies residues Ile-386–Val-406. At Gln-407–Ser-411 the chain is on the extracellular side. The chain crosses the membrane as a helical span at residues Ile-412–Phe-432. The Cytoplasmic segment spans residues Val-433–Gly-437. Residues Ala-438–Ile-458 traverse the membrane as a helical segment. The Extracellular portion of the chain corresponds to Tyr-459 to Tyr-504. Asn-480 carries an N-linked (GlcNAc...) asparagine glycan. Residues Leu-505–Leu-525 form a helical membrane-spanning segment. The Cytoplasmic segment spans residues Thr-526–Phe-619.

The protein belongs to the sodium:solute symporter (SSF) (TC 2.A.21) family. In terms of tissue distribution, expressed in the cortical region of the kidney corresponding to the proximal tubule. Expressed in Mueller cells of the inner retina (at protein level). Isoform 1 is expressed in the retina, kidney, small intestine and skeletal muscle. Isoform 2 is not detected in the kidney, small intestine and skeletal muscle. In the kidney, expressed predominantly in tubular epithelial cells of the cortical region and in the convoluted portions of the proximal tubule (pars convoluta). In the small intestine, its expression is highest in the proximal part and gradually decreased towards the distal end. Expressed in the neural retina. Not detected in the caecum and colon.

It localises to the apical cell membrane. It carries out the reaction (S)-lactate(out) + Na(+)(out) = (S)-lactate(in) + Na(+)(in). The catalysed reaction is nicotinate(out) + Na(+)(out) = nicotinate(in) + Na(+)(in). The enzyme catalyses pyruvate(out) + Na(+)(out) = pyruvate(in) + Na(+)(in). It catalyses the reaction propanoate(out) + Na(+)(out) = propanoate(in) + Na(+)(in). It carries out the reaction butanoate(out) + Na(+)(out) = butanoate(in) + Na(+)(in). The catalysed reaction is acetoacetate(out) + Na(+)(out) = acetoacetate(in) + Na(+)(in). Functionally, acts as an electroneutral and low-affinity sodium (Na(+))-dependent sodium-coupled solute transporter. Catalyzes the transport across the plasma membrane of many monocarboxylates such as lactate, pyruvate, nicotinate, propionate, butyrate and beta-D-hydroxybutyrate. May be responsible for the first step of reabsorption of monocarboxylates from the lumen of the proximal tubule of the kidney and the small intestine. May play also a role in monocarboxylates transport in the retina. Mediates electroneutral uptake of lactate, with a stoichiometry of 2 Na(+) for each lactate. The protein is Sodium-coupled monocarboxylate transporter 2 (Slc5a12) of Mus musculus (Mouse).